Reading from the N-terminus, the 736-residue chain is Phosphoribosylformylglycinamidine synthase subunit PurL (736 aa).

Residue histidine 50 is part of the active site. Positions 53 and 92 each coordinate ATP. Position 94 (glutamate 94) interacts with Mg(2+). Substrate contacts are provided by residues 95 to 98 (SHNH) and arginine 117. Histidine 96 functions as the Proton acceptor in the catalytic mechanism. Aspartate 118 serves as a coordination point for Mg(2+). Glutamine 241 lines the substrate pocket. A Mg(2+)-binding site is contributed by aspartate 269. 313 to 315 (ESQ) provides a ligand contact to substrate. 2 residues coordinate ATP: aspartate 495 and glycine 532. A Mg(2+)-binding site is contributed by asparagine 533. A substrate-binding site is contributed by serine 535.

This sequence belongs to the FGAMS family. Monomer. Part of the FGAM synthase complex composed of 1 PurL, 1 PurQ and 2 PurS subunits.

It localises to the cytoplasm. It catalyses the reaction N(2)-formyl-N(1)-(5-phospho-beta-D-ribosyl)glycinamide + L-glutamine + ATP + H2O = 2-formamido-N(1)-(5-O-phospho-beta-D-ribosyl)acetamidine + L-glutamate + ADP + phosphate + H(+). Its pathway is purine metabolism; IMP biosynthesis via de novo pathway; 5-amino-1-(5-phospho-D-ribosyl)imidazole from N(2)-formyl-N(1)-(5-phospho-D-ribosyl)glycinamide: step 1/2. Functionally, part of the phosphoribosylformylglycinamidine synthase complex involved in the purines biosynthetic pathway. Catalyzes the ATP-dependent conversion of formylglycinamide ribonucleotide (FGAR) and glutamine to yield formylglycinamidine ribonucleotide (FGAM) and glutamate. The FGAM synthase complex is composed of three subunits. PurQ produces an ammonia molecule by converting glutamine to glutamate. PurL transfers the ammonia molecule to FGAR to form FGAM in an ATP-dependent manner. PurS interacts with PurQ and PurL and is thought to assist in the transfer of the ammonia molecule from PurQ to PurL. This chain is Phosphoribosylformylglycinamidine synthase subunit PurL, found in Bartonella tribocorum (strain CIP 105476 / IBS 506).